We begin with the raw amino-acid sequence, 235 residues long: Aspartate/glutamate leucyltransferase (235 aa).

It belongs to the R-transferase family. Bpt subfamily.

It localises to the cytoplasm. The enzyme catalyses N-terminal L-glutamyl-[protein] + L-leucyl-tRNA(Leu) = N-terminal L-leucyl-L-glutamyl-[protein] + tRNA(Leu) + H(+). It catalyses the reaction N-terminal L-aspartyl-[protein] + L-leucyl-tRNA(Leu) = N-terminal L-leucyl-L-aspartyl-[protein] + tRNA(Leu) + H(+). Functionally, functions in the N-end rule pathway of protein degradation where it conjugates Leu from its aminoacyl-tRNA to the N-termini of proteins containing an N-terminal aspartate or glutamate. This chain is Aspartate/glutamate leucyltransferase, found in Stutzerimonas stutzeri (strain A1501) (Pseudomonas stutzeri).